We begin with the raw amino-acid sequence, 209 residues long: Glutathione S-transferase 1, isoform C (209 aa).

Residues 1–80 (MDFYYLPGSA…YLAEKYGKDD (80 aa)) form the GST N-terminal domain. Residues Ser9, 50-52 (HCI), and 64-66 (ESR) contribute to the glutathione site. Positions 86–207 (DPQKRAVVNQ…AGIEEFKKYF (122 aa)) constitute a GST C-terminal domain.

The protein belongs to the GST superfamily. Theta family. In terms of assembly, homodimer.

It catalyses the reaction RX + glutathione = an S-substituted glutathione + a halide anion + H(+). The catalysed reaction is 1,1,1-trichloro-2,2-bis(4-chlorophenyl)ethane = 1,1-dichloro-2,2-bis(4-chlorophenyl)ethylene + chloride + H(+). Conjugation of reduced glutathione to a wide number of exogenous and endogenous hydrophobic electrophiles. Has DDT dehydrochlorinase activity. In Anopheles gambiae (African malaria mosquito), this protein is Glutathione S-transferase 1, isoform C (GstD1).